We begin with the raw amino-acid sequence, 322 residues long: Dirigent protein 9 (322 aa).

Residues 1-20 form the signal peptide; it reads MAKALHITIFLFLISSNLLA.

The protein belongs to the plant dirigent protein family. In terms of assembly, homodimer.

The protein localises to the secreted. It localises to the extracellular space. It is found in the apoplast. Functionally, dirigent proteins impart stereoselectivity on the phenoxy radical-coupling reaction, yielding optically active lignans from two molecules of coniferyl alcohol in the biosynthesis of lignans, flavonolignans, and alkaloids and thus plays a central role in plant secondary metabolism. The protein is Dirigent protein 9 (DIR9) of Arabidopsis thaliana (Mouse-ear cress).